The primary structure comprises 68 residues: U-reduvitoxin-Pr3a (68 aa).

Residues 1 to 22 (MKAGMKLVLVLVIASIALLALA) form the signal peptide. 3 disulfide bridges follow: cysteine 29/cysteine 47, cysteine 36/cysteine 52, and cysteine 46/cysteine 59.

This sequence belongs to the venom Ptu1-like knottin family. As to expression, expressed by the venom gland.

It is found in the secreted. Binds reversibly and blocks P/Q-type voltage-gated calcium channels (Cav). The protein is U-reduvitoxin-Pr3a of Platymeris rhadamanthus (Red spot assassin bug).